Here is a 178-residue protein sequence, read N- to C-terminus: uncharacterized protein (178 aa).

5 helical membrane-spanning segments follow: residues 13–33 (GIVL…FFMP), 48–68 (MLNA…LIMI), 80–100 (ILAA…YHSI), 115–135 (IYFF…PLAL), and 155–175 (WTMP…LMIS).

It is found in the cell membrane. This is an uncharacterized protein from Bacillus subtilis (strain 168).